Consider the following 212-residue polypeptide: Uracil-DNA glycosylase (212 aa).

The Proton acceptor role is filled by aspartate 59.

This sequence belongs to the uracil-DNA glycosylase (UDG) superfamily. UNG family.

Its subcellular location is the cytoplasm. The enzyme catalyses Hydrolyzes single-stranded DNA or mismatched double-stranded DNA and polynucleotides, releasing free uracil.. Its function is as follows. Excises uracil residues from the DNA which can arise as a result of misincorporation of dUMP residues by DNA polymerase or due to deamination of cytosine. This chain is Uracil-DNA glycosylase, found in Ureaplasma urealyticum serovar 10 (strain ATCC 33699 / Western).